The following is a 210-amino-acid chain: Scoloptoxin SSD558 (210 aa).

A signal peptide spans Met1–Gly23.

Contains 3 disulfide bonds. Expressed by the venom gland.

The protein resides in the secreted. The chain is Scoloptoxin SSD558 from Scolopendra dehaani (Thai centipede).